The primary structure comprises 466 residues: 3-isopropylmalate dehydratase large subunit (466 aa).

[4Fe-4S] cluster contacts are provided by C347, C407, and C410.

It belongs to the aconitase/IPM isomerase family. LeuC type 1 subfamily. In terms of assembly, heterodimer of LeuC and LeuD. [4Fe-4S] cluster is required as a cofactor.

It carries out the reaction (2R,3S)-3-isopropylmalate = (2S)-2-isopropylmalate. It participates in amino-acid biosynthesis; L-leucine biosynthesis; L-leucine from 3-methyl-2-oxobutanoate: step 2/4. Functionally, catalyzes the isomerization between 2-isopropylmalate and 3-isopropylmalate, via the formation of 2-isopropylmaleate. This Shigella sonnei (strain Ss046) protein is 3-isopropylmalate dehydratase large subunit.